Consider the following 80-residue polypeptide: MTNTKTLEENISFESALKELEEIVKKIDNGQESLEMAVNSFERGILLKNHCEKKLKEARLKIEKITKLADSTVVLEETEV.

Belongs to the XseB family. Heterooligomer composed of large and small subunits.

Its subcellular location is the cytoplasm. It catalyses the reaction Exonucleolytic cleavage in either 5'- to 3'- or 3'- to 5'-direction to yield nucleoside 5'-phosphates.. Bidirectionally degrades single-stranded DNA into large acid-insoluble oligonucleotides, which are then degraded further into small acid-soluble oligonucleotides. This Rickettsia akari (strain Hartford) protein is Exodeoxyribonuclease 7 small subunit.